Reading from the N-terminus, the 215-residue chain is 3-dehydroquinate dehydratase (215 aa).

3-dehydroquinate contacts are provided by residues 27-29 (ELR) and R54. The active-site Proton donor/acceptor is H112. The Schiff-base intermediate with substrate role is filled by K139. Residues R176 and Q198 each contribute to the 3-dehydroquinate site.

It belongs to the type-I 3-dehydroquinase family. As to quaternary structure, homodimer.

It catalyses the reaction 3-dehydroquinate = 3-dehydroshikimate + H2O. Its pathway is metabolic intermediate biosynthesis; chorismate biosynthesis; chorismate from D-erythrose 4-phosphate and phosphoenolpyruvate: step 3/7. Its function is as follows. Involved in the third step of the chorismate pathway, which leads to the biosynthesis of aromatic amino acids. Catalyzes the cis-dehydration of 3-dehydroquinate (DHQ) and introduces the first double bond of the aromatic ring to yield 3-dehydroshikimate. The chain is 3-dehydroquinate dehydratase from Pyrococcus abyssi (strain GE5 / Orsay).